Consider the following 1836-residue polypeptide: Sodium channel protein type 4 subunit alpha (1836 aa).

The Cytoplasmic portion of the chain corresponds to 1–131; it reads MARPSLCTLV…RGAIKVLIHA (131 aa). Basic and acidic residues predominate over residues 39-60; that stretch reads LQRNKQMEIEEPERKPRSDLEA. Residues 39 to 63 are disordered; it reads LQRNKQMEIEEPERKPRSDLEAGKN. An I repeat occupies 113–454; the sequence is LLSPFSVVRR…VVAMAYAEQN (342 aa). The chain crosses the membrane as a helical span at residues 132 to 150; sequence LFSMFIMITILTNCVFMTM. Residues 151–157 are Extracellular-facing; it reads SDPPPWS. The helical transmembrane segment at 158 to 178 threads the bilayer; it reads KNVEYTFTGIYTFESLIKILA. At 179 to 192 the chain is on the cytoplasmic side; sequence RGFCVDDFTFLRDP. A helical membrane pass occupies residues 193–210; it reads WNWLDFSVIMMAYLTEFV. Topologically, residues 211–216 are extracellular; the sequence is DLGNIS. Asn-214 is a glycosylation site (N-linked (GlcNAc...) asparagine). The chain crosses the membrane as a helical span at residues 217 to 233; it reads ALRTFRVLRALKTITVI. Over 234–252 the chain is Cytoplasmic; sequence PGLKTIVGALIQSVKKLSD. Residues 253-272 form a helical membrane-spanning segment; it reads VMILTVFCLSVFALVGLQLF. The Extracellular portion of the chain corresponds to 273–391; the sequence is MGNLRQKCVR…PNYGYTSYDT (119 aa). An intrachain disulfide couples Cys-280 to Cys-360. N-linked (GlcNAc...) asparagine glycosylation is found at Asn-288, Asn-291, Asn-297, Asn-303, Asn-315, Asn-321, Asn-333, and Asn-362. The cysteines at positions 369 and 375 are disulfide-linked. The pore-forming intramembrane region spans 392–416; the sequence is FSWAFLALFRLMTQDYWENLFQLTL. The Extracellular portion of the chain corresponds to 417–423; it reads RAAGKTY. A helical transmembrane segment spans residues 424-444; the sequence is MIFFVVIIFLGSFYLINLILA. Residues 445-578 are Cytoplasmic-facing; it reads VVAMAYAEQN…NIIHLIVMDP (134 aa). The disordered stretch occupies residues 493 to 530; it reads GGEADGDPAHGKDCNGSLDTSQGEKGAPRQSSSGDSGI. Residues 509 to 528 are compositionally biased toward polar residues; the sequence is SLDTSQGEKGAPRQSSSGDS. Residues 560 to 832 form an II repeat; it reads CCAPWLKFKN…QIAIGRIKLG (273 aa). A helical transmembrane segment spans residues 579 to 597; sequence FVDLGITICIVLNTLFMAM. The Extracellular portion of the chain corresponds to 598 to 608; sequence EHYPMTEHFDN. The helical transmembrane segment at 609 to 628 threads the bilayer; it reads VLTVGNLVFTGIFTAEMVLK. The Cytoplasmic segment spans residues 629–642; that stretch reads LIAMDPYEYFQQGW. The helical transmembrane segment at 643-662 threads the bilayer; sequence NIFDSIIVTLSLVELGLANV. The Extracellular portion of the chain corresponds to 663 to 664; it reads QG. Residues 665-682 form a helical membrane-spanning segment; sequence LSVLRSFRLLRVFKLAKS. Residues 683-698 are Cytoplasmic-facing; that stretch reads WPTLNMLIKIIGNSVG. The chain crosses the membrane as a helical span at residues 699–717; the sequence is ALGNLTLVLAIIVFIFAVV. Topologically, residues 718 to 746 are extracellular; sequence GMQLFGKSYKECVCKIALDCNLPRWHMHD. An intrachain disulfide couples Cys-731 to Cys-737. Positions 747–767 form an intramembrane region, pore-forming; sequence FFHSFLIVFRILCGEWIETMW. The Extracellular portion of the chain corresponds to 768–778; the sequence is DCMEVAGQAMC. Cysteines 769 and 778 form a disulfide. Residues 779–797 form a helical membrane-spanning segment; the sequence is LTVFLMVMVIGNLVVLNLF. Topologically, residues 798-1032 are cytoplasmic; sequence LALLLSSFSA…ACFKIVEHNW (235 aa). 2 disordered regions span residues 863-885 and 930-992; these read GAGEAGEAGETAPEDEKKEPPEE and ESDL…QPEE. Positions 876 to 885 are enriched in basic and acidic residues; sequence EDEKKEPPEE. Composition is skewed to acidic residues over residues 930–947 and 975–992; these read ESDLEMPTEEETDTFSEP and EDPEEQAEENPEGEQPEE. One copy of the III repeat lies at 1013-1326; that stretch reads RGKKWWTLRR…KKYYNAMKKL (314 aa). The chain crosses the membrane as a helical span at residues 1033–1050; it reads FETFIVFMILLSSGALAF. At 1051–1063 the chain is on the extracellular side; sequence EDIYIEQRRVIRT. Residues 1064–1082 form a helical membrane-spanning segment; it reads ILEYADKVFTYIFIMEMLL. Over 1083-1096 the chain is Cytoplasmic; sequence KWVAYGFKVYFTNA. A helical membrane pass occupies residues 1097-1115; sequence WCWLDFLIVDVSIISLVAN. The Extracellular portion of the chain corresponds to 1116 to 1123; the sequence is WLGYSELG. Residues 1124 to 1142 form a helical membrane-spanning segment; the sequence is PIKSLRTLRALRPLRALSR. Topologically, residues 1143 to 1159 are cytoplasmic; sequence FEGMRVVVNALLGAIPS. Residues 1160-1179 form a helical membrane-spanning segment; that stretch reads IMNVLLVCLIFWLIFSIMGV. Residues 1180–1230 lie on the Extracellular side of the membrane; the sequence is NLFAGKFYYCINTTTSERFDISEVNNKSECESLMHTGQVRWLNVKVNYDNV. A disulfide bridge connects residues Cys-1189 and Cys-1209. N-linked (GlcNAc...) asparagine glycosylation is found at Asn-1191 and Asn-1205. Positions 1231–1252 form an intramembrane region, pore-forming; the sequence is GLGYLSLLQVATFKGWMDIMYA. Residues 1253-1269 are Extracellular-facing; it reads AVDSREKEEQPQYEVNL. Residues 1270-1291 form a helical membrane-spanning segment; it reads YMYLYFVIFIIFGSFFTLNLFI. Topologically, residues 1292–1354 are cytoplasmic; it reads GVIIDNFNQQ…MVYDLVTKQA (63 aa). Residues 1310-1312 form an important for rapid channel inactivation region; the sequence is IFM. The IV repeat unit spans residues 1335 to 1633; that stretch reads IPRPQNKIQG…WEKFDPDATQ (299 aa). The chain crosses the membrane as a helical span at residues 1355–1372; it reads FDITIMILICLNMVTMMV. Residues 1373–1383 are Extracellular-facing; the sequence is ETDNQSQLKVD. A helical transmembrane segment spans residues 1384-1402; sequence ILYNINMIFIIIFTGECVL. The Cytoplasmic portion of the chain corresponds to 1403–1414; sequence KMLALRQYYFTV. Residues 1415–1432 traverse the membrane as a helical segment; sequence GWNIFDFVVVILSIVGLA. The Extracellular segment spans residues 1433–1445; the sequence is LSDLIQKYFVSPT. Residues 1446–1462 traverse the membrane as a helical segment; sequence LFRVIRLARIGRVLRLI. At 1463–1481 the chain is on the cytoplasmic side; sequence RGAKGIRTLLFALMMSLPA. The chain crosses the membrane as a helical span at residues 1482 to 1499; the sequence is LFNIGLLLFLVMFIYSIF. Residues 1500 to 1521 lie on the Extracellular side of the membrane; it reads GMSNFAYVKKESGIDDMFNFET. Positions 1522 to 1544 form an intramembrane region, pore-forming; it reads FGNSIICLFEITTSAGWDGLLNP. At 1545–1574 the chain is on the extracellular side; the sequence is ILNSGPPDCDPNLENPGTSVKGDCGNPSIG. Cys-1553 and Cys-1568 are joined by a disulfide. Residues 1575–1597 form a helical membrane-spanning segment; it reads ICFFCSYIIISFLIVVNMYIAII. At 1598 to 1836 the chain is on the cytoplasmic side; sequence LENFNVATEE…VRPGVKESLV (239 aa). The region spanning 1727 to 1756 is the IQ domain; that stretch reads EEVCAIKIQRAYRRHLLQRSMKQASYMYRH. The interval 1778-1836 is disordered; that stretch reads KMYGHENGNSSSPSPEEKGEAGDAGPTMGLMPISPSDTAWPPAPPPGQTVRPGVKESLV.

Belongs to the sodium channel (TC 1.A.1.10) family. Nav1.4/SCN4A subfamily. As to quaternary structure, the Nav1.4 voltage-gated sodium channel consists of an ion-conducting alpha subunit SCN4A which is functional on its own and a regulatory beta subunit SCN1B. SCN1B strongly enhances the presence of SCN4A at the cell surface. SCN1B is also required for rapid channel inactivation and recovery after inactivation. It prevents the decrease of channel activity in response to repetitive, high-frequency depolarizations. Interacts with the syntrophins SNTA1, SNTB1 and SNTB2 (via PDZ domain); probably links SCN4A to the actin cytoskeleton and the extracellular matrix via the dystrophin-associated protein complex and regulates its localization in muscle cells. Interacts with TMEM233; probable regulator of the channel.

The protein resides in the cell membrane. The catalysed reaction is Na(+)(in) = Na(+)(out). Its activity is regulated as follows. The channel is inhibited by tetrodotoxin and saxitoxin. Inhibited by the conotoxin GVIIJ. Its function is as follows. Pore-forming subunit of Nav1.4, a voltage-gated sodium (Nav) channel that directly mediates the depolarizing phase of action potentials in excitable membranes. Navs, also called VGSCs (voltage-gated sodium channels) or VDSCs (voltage-dependent sodium channels), operate by switching between closed and open conformations depending on the voltage difference across the membrane. In the open conformation they allow Na(+) ions to selectively pass through the pore, along their electrochemical gradient. The influx of Na+ ions provokes membrane depolarization, initiating the propagation of electrical signals throughout cells and tissues. Highly expressed in skeletal muscles, Nav1.4 generates the action potential crucial for muscle contraction. This Homo sapiens (Human) protein is Sodium channel protein type 4 subunit alpha.